The chain runs to 351 residues: Protein MSS2, mitochondrial (351 aa).

TPR repeat units follow at residues 155–188 (HLTV…ENST) and 260–294 (KECF…MDLE).

In terms of assembly, interacts with COX18.

It is found in the mitochondrion inner membrane. Its function is as follows. Required to stabilize mitochondrial cytochrome C oxidase subunit 2 (COX2) and to translocate the C-terminal domain of COX2 through the inner membrane. The protein is Protein MSS2, mitochondrial (MSS2) of Saccharomyces cerevisiae (strain ATCC 204508 / S288c) (Baker's yeast).